The sequence spans 301 residues: Ribosomal RNA small subunit methyltransferase A (301 aa).

S-adenosyl-L-methionine contacts are provided by Asn29, Leu31, Gly56, Glu77, Asp102, and Asn127.

The protein belongs to the class I-like SAM-binding methyltransferase superfamily. rRNA adenine N(6)-methyltransferase family. RsmA subfamily.

It is found in the cytoplasm. The catalysed reaction is adenosine(1518)/adenosine(1519) in 16S rRNA + 4 S-adenosyl-L-methionine = N(6)-dimethyladenosine(1518)/N(6)-dimethyladenosine(1519) in 16S rRNA + 4 S-adenosyl-L-homocysteine + 4 H(+). Specifically dimethylates two adjacent adenosines (A1518 and A1519) in the loop of a conserved hairpin near the 3'-end of 16S rRNA in the 30S particle. May play a critical role in biogenesis of 30S subunits. This is Ribosomal RNA small subunit methyltransferase A from Halothermothrix orenii (strain H 168 / OCM 544 / DSM 9562).